The primary structure comprises 475 residues: Glutamate--tRNA ligase (475 aa).

The short motif at 8 to 18 is the 'HIGH' region element; it reads PSPTGTLHIGT. Residues 247–251 carry the 'KMSKS' region motif; sequence KLSKR. Residue K250 coordinates ATP.

The protein belongs to the class-I aminoacyl-tRNA synthetase family. Glutamate--tRNA ligase type 1 subfamily. Monomer.

The protein resides in the cytoplasm. The enzyme catalyses tRNA(Glu) + L-glutamate + ATP = L-glutamyl-tRNA(Glu) + AMP + diphosphate. Its function is as follows. Catalyzes the attachment of glutamate to tRNA(Glu) in a two-step reaction: glutamate is first activated by ATP to form Glu-AMP and then transferred to the acceptor end of tRNA(Glu). The polypeptide is Glutamate--tRNA ligase (Synechococcus sp. (strain RCC307)).